The following is a 118-amino-acid chain: MKRIAFVFSTAPHGSASGREGLDALLATSALTEALGVFFISDGVFQLLPGQKPDAVLARDYIATFKLFDLYDIDQCWICAASLRERGLKNVNFVVDATPLEPVALRRELGNYDVILRF.

Belongs to the DsrF/TusC family. As to quaternary structure, heterohexamer, formed by a dimer of trimers. The hexameric TusBCD complex contains 2 copies each of TusB, TusC and TusD. The TusBCD complex interacts with TusE.

Its subcellular location is the cytoplasm. Its function is as follows. Part of a sulfur-relay system required for 2-thiolation of 5-methylaminomethyl-2-thiouridine (mnm(5)s(2)U) at tRNA wobble positions. The chain is Protein TusC from Salmonella arizonae (strain ATCC BAA-731 / CDC346-86 / RSK2980).